A 385-amino-acid chain; its full sequence is Probable splicing factor YJU2B (385 aa).

The segment at Met1 to Tyr26 is disordered. At Ser40 the chain carries Phosphoserine. A coiled-coil region spans residues Leu182–Ile215. The segment at Phe256–Glu385 is disordered. Positions Gln260–Ser270 are enriched in polar residues. Ser306 is subject to Phosphoserine. Composition is skewed to polar residues over residues Pro307–Ser316 and Gly359–Ala373.

The protein belongs to the CWC16 family.

Its subcellular location is the nucleus. Functionally, may be involved in mRNA splicing. In Rattus norvegicus (Rat), this protein is Probable splicing factor YJU2B.